The chain runs to 243 residues: Probable 2-phosphosulfolactate phosphatase (243 aa).

This sequence belongs to the ComB family. Requires Mg(2+) as cofactor.

The catalysed reaction is (2R)-O-phospho-3-sulfolactate + H2O = (2R)-3-sulfolactate + phosphate. The protein is Probable 2-phosphosulfolactate phosphatase of Prochlorococcus marinus (strain MIT 9313).